The primary structure comprises 202 residues: Imidazoleglycerol-phosphate dehydratase (202 aa).

It belongs to the imidazoleglycerol-phosphate dehydratase family.

The protein localises to the cytoplasm. It catalyses the reaction D-erythro-1-(imidazol-4-yl)glycerol 3-phosphate = 3-(imidazol-4-yl)-2-oxopropyl phosphate + H2O. It functions in the pathway amino-acid biosynthesis; L-histidine biosynthesis; L-histidine from 5-phospho-alpha-D-ribose 1-diphosphate: step 6/9. This is Imidazoleglycerol-phosphate dehydratase from Mycolicibacterium gilvum (strain PYR-GCK) (Mycobacterium gilvum (strain PYR-GCK)).